The chain runs to 209 residues: Ribosomal RNA large subunit methyltransferase E (209 aa).

S-adenosyl-L-methionine is bound by residues Gly63, Trp65, Asp83, Asp99, and Asp124. The active-site Proton acceptor is the Lys164.

It belongs to the class I-like SAM-binding methyltransferase superfamily. RNA methyltransferase RlmE family.

It is found in the cytoplasm. It carries out the reaction uridine(2552) in 23S rRNA + S-adenosyl-L-methionine = 2'-O-methyluridine(2552) in 23S rRNA + S-adenosyl-L-homocysteine + H(+). Specifically methylates the uridine in position 2552 of 23S rRNA at the 2'-O position of the ribose in the fully assembled 50S ribosomal subunit. The chain is Ribosomal RNA large subunit methyltransferase E from Shewanella piezotolerans (strain WP3 / JCM 13877).